A 97-amino-acid chain; its full sequence is Co-chaperonin GroES (97 aa).

It belongs to the GroES chaperonin family. Heptamer of 7 subunits arranged in a ring. Interacts with the chaperonin GroEL.

The protein resides in the cytoplasm. Its function is as follows. Together with the chaperonin GroEL, plays an essential role in assisting protein folding. The GroEL-GroES system forms a nano-cage that allows encapsulation of the non-native substrate proteins and provides a physical environment optimized to promote and accelerate protein folding. GroES binds to the apical surface of the GroEL ring, thereby capping the opening of the GroEL channel. In Serratia proteamaculans (strain 568), this protein is Co-chaperonin GroES.